The chain runs to 358 residues: Histidinol-phosphate aminotransferase (358 aa).

The residue at position 221 (K221) is an N6-(pyridoxal phosphate)lysine.

This sequence belongs to the class-II pyridoxal-phosphate-dependent aminotransferase family. Histidinol-phosphate aminotransferase subfamily. Homodimer. Pyridoxal 5'-phosphate serves as cofactor.

The catalysed reaction is L-histidinol phosphate + 2-oxoglutarate = 3-(imidazol-4-yl)-2-oxopropyl phosphate + L-glutamate. The protein operates within amino-acid biosynthesis; L-histidine biosynthesis; L-histidine from 5-phospho-alpha-D-ribose 1-diphosphate: step 7/9. The polypeptide is Histidinol-phosphate aminotransferase (Caldicellulosiruptor saccharolyticus (strain ATCC 43494 / DSM 8903 / Tp8T 6331)).